The sequence spans 214 residues: Phosphoenolpyruvate guanylyltransferase (214 aa).

Phosphoenolpyruvate-binding residues include T148, G163, and S166.

This sequence belongs to the CofC family.

It carries out the reaction phosphoenolpyruvate + GTP + H(+) = enolpyruvoyl-2-diphospho-5'-guanosine + diphosphate. The protein operates within cofactor biosynthesis; coenzyme F420 biosynthesis. Functionally, guanylyltransferase that catalyzes the activation of phosphoenolpyruvate (PEP) as enolpyruvoyl-2-diphospho-5'-guanosine, via the condensation of PEP with GTP. It is involved in the biosynthesis of coenzyme F420, a hydride carrier cofactor. This chain is Phosphoenolpyruvate guanylyltransferase, found in Mycobacterium tuberculosis (strain KZN 1435 / MDR).